We begin with the raw amino-acid sequence, 405 residues long: MKAKLALSIIGLVLASLVAGCIGGGTQTQTQTQGKSIKVAILFDVGGRGDLSFNDMAYLGAERAKKELGVKIEYMTPKSKEDMVPLLEQLAKSKEYDLLVLVGFLWTTPLNEVADKYPDQKFALIDSTTGKVRPNEVDILFREQEVAALMGVIASGMAYELGGDTIGAVAGMDIPPLWKFHIGYLFGAKYFEKKTGKHVKLLWQYTGTFGDTQVGYNTAMQLLQQGAKVLYGLAGLTHVGMFDAVKDWNEQGRGKALAMGQDASQEWYAPKYIPISGAKRVDVAVYDAIKMVVDGTWKGGIITLGLKENGVGYWDLDGVKQFAEFAKEAGKLKDMTPDEVVEIVKQQREKYIKPYVWEIVNELAEKIKNGEIVFKTPKSHDEYEQIINELEKGNLNAALKKGSVE.

Residues 1 to 20 form the signal peptide; it reads MKAKLALSIIGLVLASLVAG. C21 bears the N-acetylcysteine mark. The S-archaeol cysteine moiety is linked to residue C21.

It belongs to the BMP lipoprotein family.

The protein localises to the cell membrane. This is an uncharacterized protein from Pyrococcus horikoshii (strain ATCC 700860 / DSM 12428 / JCM 9974 / NBRC 100139 / OT-3).